The following is a 263-amino-acid chain: 5'-nucleotidase SurE (263 aa).

Positions 8, 9, 40, and 93 each coordinate a divalent metal cation.

The protein belongs to the SurE nucleotidase family. Requires a divalent metal cation as cofactor.

It is found in the cytoplasm. The enzyme catalyses a ribonucleoside 5'-phosphate + H2O = a ribonucleoside + phosphate. Functionally, nucleotidase that shows phosphatase activity on nucleoside 5'-monophosphates. In Caulobacter vibrioides (strain ATCC 19089 / CIP 103742 / CB 15) (Caulobacter crescentus), this protein is 5'-nucleotidase SurE.